We begin with the raw amino-acid sequence, 64 residues long: Large ribosomal subunit protein bL35 (64 aa).

Positions 1–15 (MPKSKTHSGTAKRFK) are enriched in basic residues. The disordered stretch occupies residues 1–23 (MPKSKTHSGTAKRFKVSGSGKIL).

It belongs to the bacterial ribosomal protein bL35 family.

This is Large ribosomal subunit protein bL35 from Rhodococcus jostii (strain RHA1).